The chain runs to 378 residues: Beta-1,3-galactosyltransferase pvg3 (378 aa).

Residues 1 to 8 (MFSNSKKK) are Cytoplasmic-facing. A helical; Signal-anchor for type II membrane protein membrane pass occupies residues 9–29 (IFLYVLIAGVATFSFAFLVLN). The Lumenal segment spans residues 30-378 (RLQAEEHSLA…ATIPLPSLDV (349 aa)). 4 N-linked (GlcNAc...) asparagine glycosylation sites follow: Asn53, Asn97, Asn180, and Asn354.

The protein belongs to the glycosyltransferase 31 family.

The protein localises to the endoplasmic reticulum membrane. Its subcellular location is the golgi apparatus. The protein resides in the golgi stack membrane. The enzyme catalyses 3-O-(beta-D-galactosyl-(1-&gt;4)-beta-D-xylosyl)-L-seryl-[protein] + UDP-alpha-D-galactose = 3-O-(beta-D-galactosyl-(1-&gt;3)-beta-D-galactosyl-(1-&gt;4)-beta-D-xylosyl)-L-seryl-[protein] + UDP + H(+). In terms of biological role, involved in cell wall biogenesis. Has a role in the addition of Gal-beta1,3 moeities to galactomannans and their subsequent pyruvylation. Has a role in meiosis. In Schizosaccharomyces pombe (strain 972 / ATCC 24843) (Fission yeast), this protein is Beta-1,3-galactosyltransferase pvg3 (pvg3).